Consider the following 779-residue polypeptide: Cysteine-rich protein 2-binding protein (779 aa).

Positions 1-34 are disordered; the sequence is MDSSIHLSGLLSRHDDDATRTSTSEGLEEGEVEG. Residue Ser-4 is modified to Phosphoserine. N6-acetyllysine is present on Lys-230. 3 disordered regions span residues 247 to 292, 314 to 345, and 360 to 457; these read SRNP…PVKF, LSSS…HSAT, and PPQA…GPRY. Basic and acidic residues predominate over residues 255–275; that stretch reads MELKEKRSRTQEAKDIRRAQK. Position 284 is a phosphoserine (Ser-284). Lys-291 is subject to N6-acetyllysine. Residues 314–334 show a composition bias toward low complexity; sequence LSSSDRTPLTSPSPSPSLDFS. Basic and acidic residues-rich tracts occupy residues 402-423 and 443-452; these read RAPE…RMDG and KPPLEKDMKP. Residue Ser-413 is modified to Phosphoserine. Residues 635–779 form the N-acetyltransferase domain; that stretch reads LDYCYVRPNH…KHAFFLRLRR (145 aa).

As to quaternary structure, interacts with the LIM 1 domain of CSRP2. Component of the ADA2A-containing complex (ATAC), composed of CSRP2BP, KAT2A, TADA2L, TADA3L, ZZ3, MBIP, WDR5, YEATS2, CCDC101 and DR1. In the complex, it probably interacts directly with KAT2A, MBIP and WDR5.

Its subcellular location is the nucleus. It is found in the cytoplasm. Its function is as follows. Component of the ATAC complex, a complex with histone acetyltransferase activity on histones H3 and H4. May function as a scaffold for the ATAC complex to promote ATAC complex stability. Has also weak histone acetyltransferase activity toward histone H4. Required for the normal progression through G1 and G2/M phases of the cell cycle. In Mus musculus (Mouse), this protein is Cysteine-rich protein 2-binding protein.